The primary structure comprises 91 residues: Elongation factor 1-beta (91 aa).

The protein belongs to the EF-1-beta/EF-1-delta family.

Promotes the exchange of GDP for GTP in EF-1-alpha/GDP, thus allowing the regeneration of EF-1-alpha/GTP that could then be used to form the ternary complex EF-1-alpha/GTP/AAtRNA. In Pyrococcus furiosus (strain ATCC 43587 / DSM 3638 / JCM 8422 / Vc1), this protein is Elongation factor 1-beta.